We begin with the raw amino-acid sequence, 282 residues long: Elongation factor Ts (282 aa).

The interval 79-82 (TDFV) is involved in Mg(2+) ion dislocation from EF-Tu.

The protein belongs to the EF-Ts family.

It localises to the cytoplasm. Functionally, associates with the EF-Tu.GDP complex and induces the exchange of GDP to GTP. It remains bound to the aminoacyl-tRNA.EF-Tu.GTP complex up to the GTP hydrolysis stage on the ribosome. The polypeptide is Elongation factor Ts (Shewanella woodyi (strain ATCC 51908 / MS32)).